Consider the following 86-residue polypeptide: Small ribosomal subunit protein uS15 (86 aa).

The protein belongs to the universal ribosomal protein uS15 family. Part of the 30S ribosomal subunit. Forms a bridge to the 50S subunit in the 70S ribosome, contacting the 23S rRNA.

One of the primary rRNA binding proteins, it binds directly to 16S rRNA where it helps nucleate assembly of the platform of the 30S subunit by binding and bridging several RNA helices of the 16S rRNA. Functionally, forms an intersubunit bridge (bridge B4) with the 23S rRNA of the 50S subunit in the ribosome. The chain is Small ribosomal subunit protein uS15 from Mycoplasma genitalium (strain ATCC 33530 / DSM 19775 / NCTC 10195 / G37) (Mycoplasmoides genitalium).